A 344-amino-acid polypeptide reads, in one-letter code: Methionine import ATP-binding protein MetN (344 aa).

The ABC transporter domain occupies 7 to 245; it reads ISLKKISRCF…PQDDTTIAML (239 aa). 42 to 49 serves as a coordination point for ATP; that stretch reads GRSGAGKS.

This sequence belongs to the ABC transporter superfamily. Methionine importer (TC 3.A.1.24) family. The complex is composed of two ATP-binding proteins (MetN), two transmembrane proteins (MetI) and a solute-binding protein (MetQ).

It localises to the cell inner membrane. The enzyme catalyses L-methionine(out) + ATP + H2O = L-methionine(in) + ADP + phosphate + H(+). It catalyses the reaction D-methionine(out) + ATP + H2O = D-methionine(in) + ADP + phosphate + H(+). Functionally, part of the ABC transporter complex MetNIQ involved in methionine import. Responsible for energy coupling to the transport system. The protein is Methionine import ATP-binding protein MetN of Bartonella henselae (strain ATCC 49882 / DSM 28221 / CCUG 30454 / Houston 1) (Rochalimaea henselae).